The chain runs to 308 residues: Aspartate carbamoyltransferase catalytic subunit (308 aa).

Carbamoyl phosphate contacts are provided by Arg-51 and Thr-52. Lys-79 serves as a coordination point for L-aspartate. Residues Arg-101, His-130, and Gln-133 each contribute to the carbamoyl phosphate site. The L-aspartate site is built by Arg-163 and Arg-215. Residues Ala-258 and Pro-259 each contribute to the carbamoyl phosphate site.

The protein belongs to the aspartate/ornithine carbamoyltransferase superfamily. ATCase family. As to quaternary structure, heterododecamer (2C3:3R2) of six catalytic PyrB chains organized as two trimers (C3), and six regulatory PyrI chains organized as three dimers (R2).

It catalyses the reaction carbamoyl phosphate + L-aspartate = N-carbamoyl-L-aspartate + phosphate + H(+). Its pathway is pyrimidine metabolism; UMP biosynthesis via de novo pathway; (S)-dihydroorotate from bicarbonate: step 2/3. Its function is as follows. Catalyzes the condensation of carbamoyl phosphate and aspartate to form carbamoyl aspartate and inorganic phosphate, the committed step in the de novo pyrimidine nucleotide biosynthesis pathway. The chain is Aspartate carbamoyltransferase catalytic subunit from Pediococcus pentosaceus (strain ATCC 25745 / CCUG 21536 / LMG 10740 / 183-1w).